The following is a 102-amino-acid chain: Aspartyl/glutamyl-tRNA(Asn/Gln) amidotransferase subunit C (102 aa).

Belongs to the GatC family. As to quaternary structure, heterotrimer of A, B and C subunits.

It carries out the reaction L-glutamyl-tRNA(Gln) + L-glutamine + ATP + H2O = L-glutaminyl-tRNA(Gln) + L-glutamate + ADP + phosphate + H(+). It catalyses the reaction L-aspartyl-tRNA(Asn) + L-glutamine + ATP + H2O = L-asparaginyl-tRNA(Asn) + L-glutamate + ADP + phosphate + 2 H(+). In terms of biological role, allows the formation of correctly charged Asn-tRNA(Asn) or Gln-tRNA(Gln) through the transamidation of misacylated Asp-tRNA(Asn) or Glu-tRNA(Gln) in organisms which lack either or both of asparaginyl-tRNA or glutaminyl-tRNA synthetases. The reaction takes place in the presence of glutamine and ATP through an activated phospho-Asp-tRNA(Asn) or phospho-Glu-tRNA(Gln). The protein is Aspartyl/glutamyl-tRNA(Asn/Gln) amidotransferase subunit C of Leuconostoc citreum (strain KM20).